A 195-amino-acid polypeptide reads, in one-letter code: Putative nucleotidase BH1399 (195 aa).

It belongs to the 5'(3')-deoxyribonucleotidase family.

This is Putative nucleotidase BH1399 from Halalkalibacterium halodurans (strain ATCC BAA-125 / DSM 18197 / FERM 7344 / JCM 9153 / C-125) (Bacillus halodurans).